Reading from the N-terminus, the 302-residue chain is Uricase (302 aa).

Residues Lys-22 and Thr-67 each act as charge relay system in the active site. 6 residues coordinate urate: Thr-67, Asp-68, Phe-163, Arg-180, Gln-223, and Asn-249. His-251 acts as the Charge relay system in catalysis.

The protein belongs to the uricase family. As to quaternary structure, homotetramer.

The catalysed reaction is urate + O2 + H2O = 5-hydroxyisourate + H2O2. It participates in purine metabolism; urate degradation; (S)-allantoin from urate: step 1/3. Its function is as follows. Catalyzes the oxidation of uric acid to 5-hydroxyisourate, which is further processed to form (S)-allantoin. The sequence is that of Uricase (uox) from Arthrobacter globiformis.